A 147-amino-acid chain; its full sequence is Peptide methionine sulfoxide reductase MsrB (147 aa).

Positions methionine 1–phenylalanine 11 are enriched in basic and acidic residues. Residues methionine 1–glutamine 25 form a disordered region. A MsrB domain is found at aspartate 23–serine 145. Residues cysteine 62, cysteine 65, cysteine 111, and cysteine 114 each contribute to the Zn(2+) site. The active-site Nucleophile is the cysteine 134.

Belongs to the MsrB Met sulfoxide reductase family. Requires Zn(2+) as cofactor.

It carries out the reaction L-methionyl-[protein] + [thioredoxin]-disulfide + H2O = L-methionyl-(R)-S-oxide-[protein] + [thioredoxin]-dithiol. The sequence is that of Peptide methionine sulfoxide reductase MsrB from Vibrio parahaemolyticus serotype O3:K6 (strain RIMD 2210633).